Here is a 466-residue protein sequence, read N- to C-terminus: Soluble pyridine nucleotide transhydrogenase (466 aa).

Residue 36–45 coordinates FAD; sequence ERYQNVGGGC.

Belongs to the class-I pyridine nucleotide-disulfide oxidoreductase family. Requires FAD as cofactor.

Its subcellular location is the cytoplasm. It catalyses the reaction NAD(+) + NADPH = NADH + NADP(+). Functionally, conversion of NADPH, generated by peripheral catabolic pathways, to NADH, which can enter the respiratory chain for energy generation. This chain is Soluble pyridine nucleotide transhydrogenase, found in Escherichia coli O81 (strain ED1a).